Reading from the N-terminus, the 68-residue chain is Copper transport protein ATOX1 (68 aa).

Residues 1–63 enclose the HMA domain; sequence MPKHEFSVDM…TLNKTGKAVS (63 aa). Positions 12 and 15 each coordinate Cu cation. Residue S47 is modified to Phosphoserine. K60 carries the N6-acetyllysine modification.

Belongs to the ATX1 family. As to quaternary structure, homodimer. Interacts with ATP7B. Interacts with ATP7A. Interacts (via dimer form) with SLC31A1 (via C-terminal domain); this interaction improves ATOX1 stability and controls intracellular Cu(I) levels.

Its function is as follows. Binds and deliver cytosolic copper to the copper ATPase proteins. May be important in cellular antioxidant defense. In Rattus norvegicus (Rat), this protein is Copper transport protein ATOX1.